The following is a 314-amino-acid chain: Olfactory receptor 5D13 (314 aa).

The Extracellular portion of the chain corresponds to 1–27 (MMASERNQSSTPTFILLGFSEYPEIQV). The N-linked (GlcNAc...) asparagine glycan is linked to Asn-7. A helical transmembrane segment spans residues 28-48 (PLFLVFLFVYTVTVVGNLGMI). At 49–56 (IIIRLNSK) the chain is on the cytoplasmic side. Residues 57–77 (LHTIMCFFLSHLSLTDFCFST) traverse the membrane as a helical segment. Topologically, residues 78–101 (VVTPKLLENLVVEYRTISFSGCIM) are extracellular. Residues 102–122 (QFCFACIFGVTETFMLAAMAY) traverse the membrane as a helical segment. The Cytoplasmic portion of the chain corresponds to 123–141 (DRFVAVCKPLLYTTIMSQK). The helical transmembrane segment at 142–162 (LCALLVAGSYTWGIVCSLILT) threads the bilayer. Over 163–198 (YFLLDLSFCESTFINNFICDHSVIVSASYSDPYISQ) the chain is Extracellular. A helical membrane pass occupies residues 199–219 (RLCFIIAIFNEVSSLIIILTS). Residues 220 to 239 (YMLIFTTIMKMRSASGRQKT) are Cytoplasmic-facing. The chain crosses the membrane as a helical span at residues 240-260 (FSTCASHLTAITIFHGTILFL). The Extracellular portion of the chain corresponds to 261 to 273 (YCVPNPKTSSLIV). Residues 274–294 (TVASVFYTVAIPMLNPLIYSL) form a helical membrane-spanning segment. Residues 295 to 314 (RNKDINNMFEKLVVTKLIYH) lie on the Cytoplasmic side of the membrane.

The protein belongs to the G-protein coupled receptor 1 family.

Its subcellular location is the cell membrane. Functionally, odorant receptor. This is Olfactory receptor 5D13 (OR5D13) from Homo sapiens (Human).